A 484-amino-acid polypeptide reads, in one-letter code: uncharacterized protein (484 aa).

The 69-residue stretch at 14 to 82 folds into the HTH gntR-type domain; the sequence is VPLHRQIEQY…KGGGTKVVNS (69 aa). Positions 42–61 form a DNA-binding region, H-T-H motif; that stretch reads QRTLADMFQVNRSTVTAAID. Residue Lys327 is modified to N6-(pyridoxal phosphate)lysine.

It in the C-terminal section; belongs to the class-I pyridoxal-phosphate-dependent aminotransferase family. Pyridoxal 5'-phosphate is required as a cofactor.

This is an uncharacterized protein from Bacillus subtilis (strain 168).